The following is a 700-amino-acid chain: Beta-galactosidase Bga (700 aa).

Arginine 103 is a binding site for substrate. Residue cysteine 107 coordinates Zn(2+). Asparagine 141 contributes to the substrate binding site. Glutamate 142 (proton donor) is an active-site residue. Residues cysteine 151, cysteine 153, and cysteine 156 each contribute to the Zn(2+) site. The Nucleophile role is filled by glutamate 312. Substrate contacts are provided by residues tryptophan 320 and 360–363; that span reads EQYH. Residues 648–658 are compositionally biased toward acidic residues; that stretch reads DPESLAVDDTD. Residues 648-674 form a disordered region; that stretch reads DPESLAVDDTDRDGFDPMADDDKDSSA.

This sequence belongs to the glycosyl hydrolase 42 family.

It catalyses the reaction Hydrolysis of terminal non-reducing beta-D-galactose residues in beta-D-galactosides.. With respect to regulation, requires 4 M NaCl or KCl for maximal activity. Functionally, cleaves o-nitrophenyl-beta-D-galactopyranoside (ONPG) in vitro. The protein is Beta-galactosidase Bga of Halorubrum lacusprofundi (strain ATCC 49239 / DSM 5036 / JCM 8891 / ACAM 34).